Here is a 96-residue protein sequence, read N- to C-terminus: Co-chaperonin GroES (96 aa).

The protein belongs to the GroES chaperonin family. In terms of assembly, heptamer of 7 subunits arranged in a ring. Interacts with the chaperonin GroEL.

The protein resides in the cytoplasm. Its function is as follows. Together with the chaperonin GroEL, plays an essential role in assisting protein folding. The GroEL-GroES system forms a nano-cage that allows encapsulation of the non-native substrate proteins and provides a physical environment optimized to promote and accelerate protein folding. GroES binds to the apical surface of the GroEL ring, thereby capping the opening of the GroEL channel. The sequence is that of Co-chaperonin GroES from Hydrogenovibrio crunogenus (strain DSM 25203 / XCL-2) (Thiomicrospira crunogena).